The following is a 157-amino-acid chain: Small ribosomal subunit protein uS7 (157 aa).

The protein belongs to the universal ribosomal protein uS7 family. As to quaternary structure, part of the 30S ribosomal subunit. Contacts proteins S9 and S11.

In terms of biological role, one of the primary rRNA binding proteins, it binds directly to 16S rRNA where it nucleates assembly of the head domain of the 30S subunit. Is located at the subunit interface close to the decoding center, probably blocks exit of the E-site tRNA. This chain is Small ribosomal subunit protein uS7, found in Hydrogenovibrio crunogenus (strain DSM 25203 / XCL-2) (Thiomicrospira crunogena).